The primary structure comprises 486 residues: CREB-regulated transcription coactivator 1 homolog (486 aa).

A disordered region spans residues 1 to 62; that stretch reads MSNSNTPRKF…APMPIPQQGL (62 aa). Positions 9–23 are enriched in basic and acidic residues; that stretch reads KFSEKIAILERKQNE. Residues 34–52 are compositionally biased toward polar residues; sequence QVQSITHHPTDSSGSSTAT. Ser76 carries the post-translational modification Phosphoserine; by AMPK. Positions 103-166 are disordered; the sequence is PIQGHRSRSP…PPYNQPGQLV (64 aa). A compositionally biased stretch (pro residues) spans 144–160; the sequence is RTPPQHPQYTPYGPPYN. The residue at position 179 (Ser179) is a Phosphoserine; by AMPK. Disordered stretches follow at residues 214 to 278, 327 to 417, and 460 to 486; these read SMPG…QSPN, FNQD…SNSP, and APPQ…MLQN. Polar residues-rich tracts occupy residues 224 to 245, 387 to 402, and 461 to 475; these read PNSQ…QGSP, PESQ…QLDP, and PPQT…NNSF.

This sequence belongs to the TORC family. As to quaternary structure, interacts with crh-1. In terms of processing, phosphorylated by AMPK at Ser-76 and Ser-179. Dephosphorylated by tax-6, the catalytic subunit of calcineurin. As to expression, expressed throughout the intestine and in head and tail neurons. Expressed in octopaminergic RIC neurons.

It localises to the nucleus. The protein resides in the cytoplasm. The protein localises to the cytosol. Functionally, transcriptional coactivator for crh-1, the homolog of vertebrate transcription factor CREB1. Regulates the transcription of metabolic genes and may have a role in mitochondrial dynamics and metabolism. Involved in modulation of lifespan. Through crh-1, counteracts the pro-lifespan-extension signals of AMPK both cell autonomously and, when expressed in neurons, at a systemic level, possibly using the catecholamine analog, octopamine, as a messenger. The protein is CREB-regulated transcription coactivator 1 homolog of Caenorhabditis elegans.